The primary structure comprises 512 residues: Histidine ammonia-lyase (512 aa).

Positions A143–G145 form a cross-link, 5-imidazolinone (Ala-Gly). 2,3-didehydroalanine (Ser) is present on S144.

This sequence belongs to the PAL/histidase family. Post-translationally, contains an active site 4-methylidene-imidazol-5-one (MIO), which is formed autocatalytically by cyclization and dehydration of residues Ala-Ser-Gly.

It localises to the cytoplasm. It carries out the reaction L-histidine = trans-urocanate + NH4(+). Its pathway is amino-acid degradation; L-histidine degradation into L-glutamate; N-formimidoyl-L-glutamate from L-histidine: step 1/3. In Ruegeria pomeroyi (strain ATCC 700808 / DSM 15171 / DSS-3) (Silicibacter pomeroyi), this protein is Histidine ammonia-lyase.